A 59-amino-acid polypeptide reads, in one-letter code: MDKELPKASPSEPALNIKKSGKSFKCKKPTKNVQVFLINRQLGRNRSDTDLSKWLWMLP.

Residues 1-22 (MDKELPKASPSEPALNIKKSGK) form a disordered region.

The polypeptide is Embryonic testis differentiation protein homolog C (Homo sapiens (Human)).